We begin with the raw amino-acid sequence, 729 residues long: Pentatricopeptide repeat-containing protein At4g04370 (729 aa).

17 PPR repeats span residues serine 10–proline 44, aspartate 45–serine 79, aspartate 80–arginine 110, aspartate 111–proline 145, aspartate 178–arginine 208, aspartate 209–proline 243, aspartate 244–valine 278, aspartate 279–lysine 309, aspartate 310–leucine 344, serine 345–leucine 379, aspartate 380–serine 414, tryptophan 415–glutamine 445, aspartate 447–proline 481, cysteine 482–lysine 512, aspartate 513–proline 547, asparagine 548–proline 583, and asparagine 584–aspartate 618. Residues valine 619 to asparagine 694 are type E motif. Residues glycine 695–methionine 723 are type E(+) motif.

Belongs to the PPR family. PCMP-E subfamily.

The polypeptide is Pentatricopeptide repeat-containing protein At4g04370 (PCMP-E99) (Arabidopsis thaliana (Mouse-ear cress)).